Reading from the N-terminus, the 126-residue chain is Lymphocyte antigen 6E (126 aa).

Positions 1-20 (MKAFLFAVLAAVLCVERAHT) are cleaved as a signal peptide. In terms of domain architecture, UPAR/Ly6 spans 21-98 (LICFSCSDAS…CCDSFLCNIS (78 aa)). 5 cysteine pairs are disulfide-bonded: Cys23/Cys48, Cys26/Cys35, Cys41/Cys69, Cys73/Cys89, and Cys90/Cys95. The N-linked (GlcNAc...) asparagine glycan is linked to Asn96. A lipid anchor (GPI-anchor amidated serine) is attached at Ser98. A propeptide spans 99-126 (GSSSVKASYAVLALGILVSFVYVLRARE) (removed in mature form).

As to expression, expressed by thymic blast cells.

It localises to the cell membrane. The polypeptide is Lymphocyte antigen 6E (LY6E) (Gallus gallus (Chicken)).